A 266-amino-acid chain; its full sequence is Large ribosomal subunit protein eL8 (266 aa).

Glycyl lysine isopeptide (Lys-Gly) (interchain with G-Cter in SUMO2) cross-links involve residues Lys11, Lys20, and Lys21. N6-acetyllysine is present on Lys34. Lys48 is covalently cross-linked (Glycyl lysine isopeptide (Lys-Gly) (interchain with G-Cter in SUMO2)). An N6-acetyllysine; alternate modification is found at Lys97. Lys97 is covalently cross-linked (Glycyl lysine isopeptide (Lys-Gly) (interchain with G-Cter in SUMO2); alternate). Lys125 is covalently cross-linked (Glycyl lysine isopeptide (Lys-Gly) (interchain with G-Cter in SUMO2)). Lys217 carries the post-translational modification N6-acetyllysine. Lys245 is covalently cross-linked (Glycyl lysine isopeptide (Lys-Gly) (interchain with G-Cter in SUMO2)).

This sequence belongs to the eukaryotic ribosomal protein eL8 family. As to quaternary structure, component of the large ribosomal subunit. Interacts with CRY1. Interacts with DICER1, AGO2, TARBP2, MOV10 and EIF6; they form a large RNA-induced silencing complex (RISC).

The protein resides in the cytoplasm. Functionally, component of the large ribosomal subunit. The ribosome is a large ribonucleoprotein complex responsible for the synthesis of proteins in the cell. The protein is Large ribosomal subunit protein eL8 (RPL7A) of Bos taurus (Bovine).